Here is a 311-residue protein sequence, read N- to C-terminus: Solute carrier family 25 member 36-A (311 aa).

Solcar repeat units follow at residues Arg4–Lys108, Asp116–Lys203, and Ser224–Leu308. 6 helical membrane-spanning segments follow: residues Leu7–Leu27, Phe41–Ala57, Asn111–Thr131, Met180–Ile200, Phe226–Pro246, and Gln291–Gly311.

It belongs to the mitochondrial carrier (TC 2.A.29) family.

The protein localises to the mitochondrion inner membrane. In Danio rerio (Zebrafish), this protein is Solute carrier family 25 member 36-A (slc25a36a).